A 407-amino-acid chain; its full sequence is Peptidase T (407 aa).

Histidine 78 lines the Zn(2+) pocket. Aspartate 80 is an active-site residue. Aspartate 139 contributes to the Zn(2+) binding site. Glutamate 173 (proton acceptor) is an active-site residue. Zn(2+) contacts are provided by glutamate 174, aspartate 196, and histidine 378.

Belongs to the peptidase M20B family. Zn(2+) is required as a cofactor.

It localises to the cytoplasm. The catalysed reaction is Release of the N-terminal residue from a tripeptide.. Functionally, cleaves the N-terminal amino acid of tripeptides. The chain is Peptidase T from Shewanella halifaxensis (strain HAW-EB4).